Here is a 284-residue protein sequence, read N- to C-terminus: Lipoyl synthase (284 aa).

Residues Cys-36, Cys-41, Cys-47, Cys-62, Cys-66, Cys-69, and Ser-273 each coordinate [4Fe-4S] cluster. The Radical SAM core domain occupies 48–262 (WGKGTATFMI…RTIGLKKGFR (215 aa)).

It belongs to the radical SAM superfamily. Lipoyl synthase family. The cofactor is [4Fe-4S] cluster.

It localises to the cytoplasm. The catalysed reaction is [[Fe-S] cluster scaffold protein carrying a second [4Fe-4S](2+) cluster] + N(6)-octanoyl-L-lysyl-[protein] + 2 oxidized [2Fe-2S]-[ferredoxin] + 2 S-adenosyl-L-methionine + 4 H(+) = [[Fe-S] cluster scaffold protein] + N(6)-[(R)-dihydrolipoyl]-L-lysyl-[protein] + 4 Fe(3+) + 2 hydrogen sulfide + 2 5'-deoxyadenosine + 2 L-methionine + 2 reduced [2Fe-2S]-[ferredoxin]. It functions in the pathway protein modification; protein lipoylation via endogenous pathway; protein N(6)-(lipoyl)lysine from octanoyl-[acyl-carrier-protein]: step 2/2. In terms of biological role, catalyzes the radical-mediated insertion of two sulfur atoms into the C-6 and C-8 positions of the octanoyl moiety bound to the lipoyl domains of lipoate-dependent enzymes, thereby converting the octanoylated domains into lipoylated derivatives. The sequence is that of Lipoyl synthase from Phocaeicola vulgatus (strain ATCC 8482 / DSM 1447 / JCM 5826 / CCUG 4940 / NBRC 14291 / NCTC 11154) (Bacteroides vulgatus).